The chain runs to 287 residues: Inorganic pyrophosphatase (287 aa).

A diphosphate-binding site is contributed by R79. Mg(2+)-binding residues include D116, D121, and D153. A compositionally biased stretch (polar residues) spans 244-258 (NSTLGNSDSVDSSKL). The segment at 244–269 (NSTLGNSDSVDSSKLASIPRGENLPP) is disordered.

This sequence belongs to the PPase family. Mg(2+) is required as a cofactor.

The protein resides in the cytoplasm. It catalyses the reaction diphosphate + H2O = 2 phosphate + H(+). Its function is as follows. Involved in osmoadaptation. This chain is Inorganic pyrophosphatase (ipp1), found in Emericella nidulans (strain FGSC A4 / ATCC 38163 / CBS 112.46 / NRRL 194 / M139) (Aspergillus nidulans).